The following is a 427-amino-acid chain: Serine hydroxymethyltransferase (427 aa).

(6S)-5,6,7,8-tetrahydrofolate is bound by residues Leu-122 and Gly-126–Leu-128. At Lys-231 the chain carries N6-(pyridoxal phosphate)lysine. (6S)-5,6,7,8-tetrahydrofolate-binding positions include Glu-247 and Ser-355–Phe-357.

The protein belongs to the SHMT family. Homodimer. Pyridoxal 5'-phosphate is required as a cofactor.

The protein resides in the cytoplasm. It catalyses the reaction (6R)-5,10-methylene-5,6,7,8-tetrahydrofolate + glycine + H2O = (6S)-5,6,7,8-tetrahydrofolate + L-serine. Its pathway is one-carbon metabolism; tetrahydrofolate interconversion. It functions in the pathway amino-acid biosynthesis; glycine biosynthesis; glycine from L-serine: step 1/1. Its function is as follows. Catalyzes the reversible interconversion of serine and glycine with tetrahydrofolate (THF) serving as the one-carbon carrier. This reaction serves as the major source of one-carbon groups required for the biosynthesis of purines, thymidylate, methionine, and other important biomolecules. Also exhibits THF-independent aldolase activity toward beta-hydroxyamino acids, producing glycine and aldehydes, via a retro-aldol mechanism. The sequence is that of Serine hydroxymethyltransferase from Microcystis aeruginosa (strain NIES-843 / IAM M-2473).